The primary structure comprises 204 residues: LexA repressor (204 aa).

The segment at residues 29–49 is a DNA-binding region (H-T-H motif); that stretch reads VREICKGVGLSSTSSVHGHLS. Residues Ser126 and Lys163 each act as for autocatalytic cleavage activity in the active site.

It belongs to the peptidase S24 family. In terms of assembly, homodimer.

It catalyses the reaction Hydrolysis of Ala-|-Gly bond in repressor LexA.. Functionally, represses a number of genes involved in the response to DNA damage (SOS response), including recA and lexA. In the presence of single-stranded DNA, RecA interacts with LexA causing an autocatalytic cleavage which disrupts the DNA-binding part of LexA, leading to derepression of the SOS regulon and eventually DNA repair. This is LexA repressor from Clostridium novyi (strain NT).